The primary structure comprises 122 residues: uncharacterized protein (122 aa).

The N-terminal stretch at 1-35 (MCCYVGKATKIFLCLAAALIVVGLVLGFGLAHRTW) is a signal peptide. Positions 55-83 (YGGGGGGGDPLPATSGAGDTPPGVPLTEP) are disordered.

This is an uncharacterized protein from Oryza sativa subsp. japonica (Rice).